The following is a 347-amino-acid chain: UDP-N-acetylenolpyruvoylglucosamine reductase (347 aa).

An FAD-binding PCMH-type domain is found at 15–187; the sequence is FGIEQTCSYL…TAIGLKLPKR (173 aa). Residue Arg163 is part of the active site. The Proton donor role is filled by Ser233. Glu328 is an active-site residue.

The protein belongs to the MurB family. Requires FAD as cofactor.

Its subcellular location is the cytoplasm. It carries out the reaction UDP-N-acetyl-alpha-D-muramate + NADP(+) = UDP-N-acetyl-3-O-(1-carboxyvinyl)-alpha-D-glucosamine + NADPH + H(+). Its pathway is cell wall biogenesis; peptidoglycan biosynthesis. In terms of biological role, cell wall formation. The protein is UDP-N-acetylenolpyruvoylglucosamine reductase of Vibrio parahaemolyticus serotype O3:K6 (strain RIMD 2210633).